The primary structure comprises 466 residues: Argininosuccinate lyase (466 aa).

It belongs to the lyase 1 family. Argininosuccinate lyase subfamily.

It is found in the cytoplasm. The catalysed reaction is 2-(N(omega)-L-arginino)succinate = fumarate + L-arginine. It participates in amino-acid biosynthesis; L-arginine biosynthesis; L-arginine from L-ornithine and carbamoyl phosphate: step 3/3. The polypeptide is Argininosuccinate lyase (Roseobacter denitrificans (strain ATCC 33942 / OCh 114) (Erythrobacter sp. (strain OCh 114))).